The chain runs to 72 residues: Translation initiation factor IF-1 (72 aa).

An S1-like domain is found at Met-1 to Arg-72.

Belongs to the IF-1 family. In terms of assembly, component of the 30S ribosomal translation pre-initiation complex which assembles on the 30S ribosome in the order IF-2 and IF-3, IF-1 and N-formylmethionyl-tRNA(fMet); mRNA recruitment can occur at any time during PIC assembly.

It is found in the cytoplasm. In terms of biological role, one of the essential components for the initiation of protein synthesis. Stabilizes the binding of IF-2 and IF-3 on the 30S subunit to which N-formylmethionyl-tRNA(fMet) subsequently binds. Helps modulate mRNA selection, yielding the 30S pre-initiation complex (PIC). Upon addition of the 50S ribosomal subunit IF-1, IF-2 and IF-3 are released leaving the mature 70S translation initiation complex. This chain is Translation initiation factor IF-1, found in Buchnera aphidicola subsp. Acyrthosiphon pisum (strain APS) (Acyrthosiphon pisum symbiotic bacterium).